The sequence spans 95 residues: MQIDDKLLTKLEKLSALKIADDKRQELEEQLSQIVNFVEKLDELKLDDVEAMTSTTNTATPFRLDESRKSDVIDMVSKHAPNSQDGFFIVPKIIE.

It belongs to the GatC family. As to quaternary structure, heterotrimer of A, B and C subunits.

The enzyme catalyses L-glutamyl-tRNA(Gln) + L-glutamine + ATP + H2O = L-glutaminyl-tRNA(Gln) + L-glutamate + ADP + phosphate + H(+). The catalysed reaction is L-aspartyl-tRNA(Asn) + L-glutamine + ATP + H2O = L-asparaginyl-tRNA(Asn) + L-glutamate + ADP + phosphate + 2 H(+). Functionally, allows the formation of correctly charged Asn-tRNA(Asn) or Gln-tRNA(Gln) through the transamidation of misacylated Asp-tRNA(Asn) or Glu-tRNA(Gln) in organisms which lack either or both of asparaginyl-tRNA or glutaminyl-tRNA synthetases. The reaction takes place in the presence of glutamine and ATP through an activated phospho-Asp-tRNA(Asn) or phospho-Glu-tRNA(Gln). The protein is Aspartyl/glutamyl-tRNA(Asn/Gln) amidotransferase subunit C of Campylobacter lari (strain RM2100 / D67 / ATCC BAA-1060).